Consider the following 326-residue polypeptide: Arabinose 5-phosphate isomerase KdsD (326 aa).

Residues 38–181 form the SIS domain; that stretch reads ACELLLAGKG…AIALLEARGF (144 aa). Residues 72-73, His79, His85, 111-120, and 145-147 contribute to the substrate site; these read GT, TLLPLIKRLG, and SVG. Position 79 (His79) interacts with Zn(2+). 2 CBS domains span residues 207–265 and 274–326; these read MHVG…GIDV and MTVH…AGVM.

It belongs to the SIS family. GutQ/KpsF subfamily. Homotetramer.

The enzyme catalyses D-arabinose 5-phosphate = D-ribulose 5-phosphate. It functions in the pathway carbohydrate biosynthesis; 3-deoxy-D-manno-octulosonate biosynthesis; 3-deoxy-D-manno-octulosonate from D-ribulose 5-phosphate: step 1/3. Its pathway is bacterial outer membrane biogenesis; lipopolysaccharide biosynthesis. Functionally, involved in the biosynthesis of 3-deoxy-D-manno-octulosonate (KDO), a unique 8-carbon sugar component of lipopolysaccharides (LPSs). Catalyzes the reversible aldol-ketol isomerization between D-ribulose 5-phosphate (Ru5P) and D-arabinose 5-phosphate (A5P). The chain is Arabinose 5-phosphate isomerase KdsD (kdsD) from Pseudomonas aeruginosa (strain ATCC 15692 / DSM 22644 / CIP 104116 / JCM 14847 / LMG 12228 / 1C / PRS 101 / PAO1).